Here is a 248-residue protein sequence, read N- to C-terminus: Peroxisomal membrane protein 11A (248 aa).

The Cytoplasmic portion of the chain corresponds to 1–97 (MATKAPEKIT…RSSRWDSNHE (97 aa)). A helical membrane pass occupies residues 98-118 (LVLLIIAYGGEGLYYFVEQFI). Topologically, residues 119 to 220 (WLTKSGLIDA…MTIADIRDGK (102 aa)) are lumenal. The helical transmembrane segment at 221–241 (GVLSAPNVISSAGLFSAIVST) threads the bilayer. Topologically, residues 242–248 (HKNWISC) are cytoplasmic.

It belongs to the peroxin-11 family. In terms of assembly, homooligomer. Interacts with ARC5 and FIS1B on peroxisomes. In terms of tissue distribution, expressed in developing siliques.

The protein resides in the peroxisome membrane. Involved in peroxisomal proliferation. Promotes peroxisomal duplication, aggregation or elongation without fission. The sequence is that of Peroxisomal membrane protein 11A (PEX11A) from Arabidopsis thaliana (Mouse-ear cress).